A 442-amino-acid chain; its full sequence is Threonine/serine transporter TdcC (442 aa).

A run of 11 helical transmembrane segments spans residues 21 to 41 (TTWT…FFPI), 44 to 64 (GFGG…IAFL), 96 to 116 (GVVI…IYGV), 139 to 159 (VVAL…KDLM), 162 to 182 (VMSF…LSLI), 206 to 226 (ILVT…FSPI), 258 to 278 (ASIL…FTLS), 312 to 332 (ITLE…SFFG), 364 to 384 (LISM…NPNI), 388 to 408 (IEAM…MYAI), and 422 to 442 (ENYF…YKLL).

It belongs to the amino acid/polyamine transporter 2 family. SdaC/TdcC subfamily.

It is found in the cell inner membrane. The catalysed reaction is L-threonine(in) + H(+)(in) = L-threonine(out) + H(+)(out). It catalyses the reaction L-serine(in) + H(+)(in) = L-serine(out) + H(+)(out). Functionally, involved in the import of threonine and serine into the cell, with the concomitant import of a proton (symport system). The polypeptide is Threonine/serine transporter TdcC (Yersinia enterocolitica serotype O:8 / biotype 1B (strain NCTC 13174 / 8081)).